A 900-amino-acid chain; its full sequence is MSHLKTSTEDEEPTEEYENVGNAASKWPKVEDPMPESKVGDTCVWDSKVENQQKKPVENRMKEDKSSIREAISKAKSTANIKTEQEGEASEKSLHLSPQHITHQTMPIGQRGSEQGKRVENINGTSYPSLQQKTNAVKKLHKCDECGKSFKYNSRLVQHKIMHTGEKRYECDDCGGTFRSSSSLRVHKRIHTGEKPYKCEECGKAYMSYSSLINHKSTHSGEKNCKCDECGKSFNYSSVLDQHKRIHTGEKPYECGECGKAFRNSSGLRVHKRIHTGEKPYECDICGKTFSNSSGLRVHKRIHTGEKPYECDECGKAFITCRTLLNHKSIHFGDKPYKCDECEKSFNYSSLLIQHKVIHTGEKPYECDECGKAFRNSSGLIVHKRIHTGEKPYKCDVCGKAFSYSSGLAVHKSIHPGKKAHECKECGKSFSYNSLLLQHRTIHTGERPYVCDVCGKTFRNNAGLKVHRRLHTGEKPYKCDVCGKAYISRSSLKNHKGIHLGEKPYKCSYCEKSFNYSSALEQHKRIHTREKPFGCDECGKAFRNNSGLKVHKRIHTGERPYKCEECGKAYISLSSLINHKSVHPGEKPFKCDECEKAFITYRTLTNHKKVHLGEKPYKCDVCEKSFNYTSLLSQHRRVHTREKPYECDRCEKVFRNNSSLKVHKRIHTGERPYECDVCGKAYISHSSLINHKSTHPGRTPHTCDECGKAFFSSRTLISHKRVHLGEKPFKCVECGKSFSYSSLLSQHKRIHTGEKPYVCDRCGKAFRNSSGLTVHKRIHTGEKPYECDECGKAYISHSSLINHKSVHQGKQPYNCECGKSFNYRSVLDQHKRIHTGKKPYRCNECGKAFNIRSNLTKHKRTHTGEESLNVIYVGSYSGTSQKRTYEGGNALDGGRMRMPL.

The tract at residues 1–97 (MSHLKTSTED…EASEKSLHLS (97 aa)) is disordered. Lys-5 participates in a covalent cross-link: Glycyl lysine isopeptide (Lys-Gly) (interchain with G-Cter in SUMO2). Positions 9–18 (EDEEPTEEYE) are enriched in acidic residues. A compositionally biased stretch (basic and acidic residues) spans 47–73 (SKVENQQKKPVENRMKEDKSSIREAIS). Residues Lys-48, Lys-62, Lys-65, Lys-82, and Lys-92 each participate in a glycyl lysine isopeptide (Lys-Gly) (interchain with G-Cter in SUMO2) cross-link. Basic and acidic residues predominate over residues 83–94 (TEQEGEASEKSL). 13 consecutive C2H2-type zinc fingers follow at residues 225–247 (CKCD…KRIH), 253–275 (YECG…KRIH), 281–303 (YECD…KRIH), 309–331 (YECD…KSIH), 337–359 (YKCD…KVIH), 365–387 (YECD…KRIH), 393–415 (YKCD…KSIH), 421–443 (HECK…RTIH), 449–471 (YVCD…RRLH), 477–499 (YKCD…KGIH), 505–527 (YKCS…KRIH), 533–555 (FGCD…KRIH), and 561–583 (YKCE…KSVH). Lys-587 is covalently cross-linked (Glycyl lysine isopeptide (Lys-Gly) (interchain with G-Cter in SUMO2)). 10 consecutive C2H2-type zinc fingers follow at residues 589-611 (FKCD…KKVH), 617-639 (YKCD…RRVH), 645-667 (YECD…KRIH), 673-695 (YECD…KSTH), 701-723 (HTCD…KRVH), 729-751 (FKCV…KRIH), 757-779 (YVCD…KRIH), 785-807 (YECD…KSVH), 813-834 (YNCE…KRIH), and 840-862 (YRCN…KRTH). Lys-748 is covalently cross-linked (Glycyl lysine isopeptide (Lys-Gly) (interchain with G-Cter in SUMO2)). Residue Lys-882 forms a Glycyl lysine isopeptide (Lys-Gly) (interchain with G-Cter in SUMO2) linkage.

This sequence belongs to the krueppel C2H2-type zinc-finger protein family.

It localises to the nucleus. Functionally, may play a role in differentiating skeletal muscle. The polypeptide is Zinc finger protein 62 homolog (ZFP62) (Homo sapiens (Human)).